Consider the following 478-residue polypeptide: MAEARSGSLEYTPTWVVAFICFIIVLLSLLAERGLHHLGKCLKRRQQDALFEALQKLKEELMLLGFISLMLTVSQAAIRHICVPPALVNNMFPCKKPLEEHHAPKSSHSIINNARHLLSTGESPDHCAAKGQVPLVSVEALHQLHIFIFVLAVFHVIFCASTMVLGGARIQQWKHWEDWFKKRPSQKGTTRRGHHAHAHELFSANHEFFEMHAGGFWRRSVVISWVRSFFKQFYGSVTKSEYIALRQAFIMSHCRTNPSFDFHKYMLRTLEIDFKKVVSISWYLWLFVVVFLLLNVGGWNTYFWLSFLPLILLLMVGAKLEYIISSLALDVSEKRSRAEEAVITPSDELFWFHRPGIVLQLIHFILFQNSFEIAFFFWILFTYGIHSCIMEKLGYLIPRLVMGVLVQVLCSYSTLPLYALVTQMGSKFKKGIFDNVVQSTLEGWLEDTRNRGESTSEAHRIEMQPTTPESYNVQSENP.

Residues 1 to 10 (MAEARSGSLE) are Extracellular-facing. A helical membrane pass occupies residues 11–31 (YTPTWVVAFICFIIVLLSLLA). The Cytoplasmic portion of the chain corresponds to 32–60 (ERGLHHLGKCLKRRQQDALFEALQKLKEE). A helical membrane pass occupies residues 61–81 (LMLLGFISLMLTVSQAAIRHI). Over 82–145 (CVPPALVNNM…VSVEALHQLH (64 aa)) the chain is Extracellular. The helical transmembrane segment at 146-166 (IFIFVLAVFHVIFCASTMVLG) threads the bilayer. Over 167–276 (GARIQQWKHW…LRTLEIDFKK (110 aa)) the chain is Cytoplasmic. 2 consecutive transmembrane segments (helical) span residues 277-297 (VVSI…LNVG) and 298-318 (GWNT…MVGA). At 319 to 360 (KLEYIISSLALDVSEKRSRAEEAVITPSDELFWFHRPGIVLQ) the chain is on the cytoplasmic side. The chain crosses the membrane as a helical span at residues 361 to 381 (LIHFILFQNSFEIAFFFWILF). The Extracellular portion of the chain corresponds to 382 to 400 (TYGIHSCIMEKLGYLIPRL). A helical transmembrane segment spans residues 401–421 (VMGVLVQVLCSYSTLPLYALV). Residues 422–478 (TQMGSKFKKGIFDNVVQSTLEGWLEDTRNRGESTSEAHRIEMQPTTPESYNVQSENP) are Cytoplasmic-facing. Residues 435–456 (NVVQSTLEGWLEDTRNRGESTS) form a calmodulin-binding region. Residues 449 to 462 (RNRGESTSEAHRIE) show a composition bias toward basic and acidic residues. The interval 449–478 (RNRGESTSEAHRIEMQPTTPESYNVQSENP) is disordered. Over residues 464-478 (QPTTPESYNVQSENP) the composition is skewed to polar residues.

Belongs to the MLO family.

It localises to the membrane. May be involved in modulation of pathogen defense and leaf cell death. Activity seems to be regulated by Ca(2+)-dependent calmodulin binding and seems not to require heterotrimeric G proteins. The polypeptide is MLO-like protein 13 (MLO13) (Arabidopsis thaliana (Mouse-ear cress)).